Consider the following 426-residue polypeptide: Serine--tRNA ligase (426 aa).

Thr-233 to Glu-235 contributes to the L-serine binding site. An ATP-binding site is contributed by Arg-264–Glu-266. Glu-287 provides a ligand contact to L-serine. Glu-351–Ser-354 lines the ATP pocket. Residue Ser-387 participates in L-serine binding.

This sequence belongs to the class-II aminoacyl-tRNA synthetase family. Type-1 seryl-tRNA synthetase subfamily. In terms of assembly, homodimer. The tRNA molecule binds across the dimer.

The protein resides in the cytoplasm. The enzyme catalyses tRNA(Ser) + L-serine + ATP = L-seryl-tRNA(Ser) + AMP + diphosphate + H(+). The catalysed reaction is tRNA(Sec) + L-serine + ATP = L-seryl-tRNA(Sec) + AMP + diphosphate + H(+). Its pathway is aminoacyl-tRNA biosynthesis; selenocysteinyl-tRNA(Sec) biosynthesis; L-seryl-tRNA(Sec) from L-serine and tRNA(Sec): step 1/1. Catalyzes the attachment of serine to tRNA(Ser). Is also able to aminoacylate tRNA(Sec) with serine, to form the misacylated tRNA L-seryl-tRNA(Sec), which will be further converted into selenocysteinyl-tRNA(Sec). The polypeptide is Serine--tRNA ligase (Pseudomonas putida (strain ATCC 700007 / DSM 6899 / JCM 31910 / BCRC 17059 / LMG 24140 / F1)).